Here is a 198-residue protein sequence, read N- to C-terminus: Pyridoxal 5'-phosphate synthase subunit PdxT (198 aa).

Residue 52–54 (GES) coordinates L-glutamine. Cys-84 acts as the Nucleophile in catalysis. Residues Arg-115 and 143 to 144 (IR) each bind L-glutamine. Residues His-179 and Glu-181 each act as charge relay system in the active site.

Belongs to the glutaminase PdxT/SNO family. As to quaternary structure, in the presence of PdxS, forms a dodecamer of heterodimers. Only shows activity in the heterodimer.

The enzyme catalyses aldehydo-D-ribose 5-phosphate + D-glyceraldehyde 3-phosphate + L-glutamine = pyridoxal 5'-phosphate + L-glutamate + phosphate + 3 H2O + H(+). It carries out the reaction L-glutamine + H2O = L-glutamate + NH4(+). It participates in cofactor biosynthesis; pyridoxal 5'-phosphate biosynthesis. Functionally, catalyzes the hydrolysis of glutamine to glutamate and ammonia as part of the biosynthesis of pyridoxal 5'-phosphate. The resulting ammonia molecule is channeled to the active site of PdxS. The chain is Pyridoxal 5'-phosphate synthase subunit PdxT from Methanococcoides burtonii (strain DSM 6242 / NBRC 107633 / OCM 468 / ACE-M).